We begin with the raw amino-acid sequence, 315 residues long: Ribosomal RNA small subunit methyltransferase H (315 aa).

Residues 42–44 (GGH), aspartate 59, phenylalanine 96, aspartate 108, and glutamine 115 each bind S-adenosyl-L-methionine.

The protein belongs to the methyltransferase superfamily. RsmH family.

Its subcellular location is the cytoplasm. It catalyses the reaction cytidine(1402) in 16S rRNA + S-adenosyl-L-methionine = N(4)-methylcytidine(1402) in 16S rRNA + S-adenosyl-L-homocysteine + H(+). Specifically methylates the N4 position of cytidine in position 1402 (C1402) of 16S rRNA. This is Ribosomal RNA small subunit methyltransferase H from Gemmatimonas aurantiaca (strain DSM 14586 / JCM 11422 / NBRC 100505 / T-27).